A 471-amino-acid chain; its full sequence is Regulator of microtubule dynamics protein 3 (471 aa).

Residues 1–9 (MSSLGTLGG) are Mitochondrial intermembrane-facing. The helical transmembrane segment at 10–32 (ARAGLGLLLGTAAGLGFLCALYS) threads the bilayer. Residues 33–471 (QRWKRTQRRG…LEELEVILGE (439 aa)) are Cytoplasmic-facing. The interval 39–70 (QRRGQSQSQSNSLDYTQTSEPGRQVRPLRAAP) is disordered. The segment covering 41 to 50 (RGQSQSQSNS) has biased composition (low complexity). A phosphoserine mark is found at Ser44, Ser46, Ser50, and Ser57. Residues 90–123 (LDRLEFVLTSLVALRREVEELRSSLQGLAGQIVG) are a coiled coil. The FFAT signature appears at 156 to 162 (VYFTAAS). Position 159 is a phosphothreonine (Thr159). The tract at residues 169-206 (AESEGGYTTANAESDYERDSERESDGDGEDEVSCETVK) is disordered. Ser182, Ser192, Ser212, and Ser233 each carry phosphoserine. Residues 183–193 (DYERDSERESD) show a composition bias toward basic and acidic residues.

This sequence belongs to the RMDN family. In terms of assembly, interacts with PTPN2. Interacts with microtubules. Interacts with VAPB. Interacts (via FFAT motif) with MOSPD2 (via MSP domain). Interacts (via phosphorylated FFAT motif) with MOSPD2, VAPA and VAPB. In terms of processing, phosphorylation at Thr-160 of the FFAT motif activates interaction with MOSPD2, VAPA and VAPB.

Its subcellular location is the mitochondrion outer membrane. It is found in the cytoplasm. The protein localises to the nucleus. The protein resides in the cytoskeleton. It localises to the spindle. Its subcellular location is the spindle pole. Its function is as follows. Involved in cellular calcium homeostasis regulation. May participate in differentiation and apoptosis of keratinocytes. Overexpression induces apoptosis. The chain is Regulator of microtubule dynamics protein 3 from Bos taurus (Bovine).